A 210-amino-acid polypeptide reads, in one-letter code: Dephospho-CoA kinase (210 aa).

In terms of domain architecture, DPCK spans Trp-4–Lys-202. Gly-12 to Ala-17 provides a ligand contact to ATP.

Belongs to the CoaE family.

It is found in the cytoplasm. The enzyme catalyses 3'-dephospho-CoA + ATP = ADP + CoA + H(+). It functions in the pathway cofactor biosynthesis; coenzyme A biosynthesis; CoA from (R)-pantothenate: step 5/5. Functionally, catalyzes the phosphorylation of the 3'-hydroxyl group of dephosphocoenzyme A to form coenzyme A. The sequence is that of Dephospho-CoA kinase from Neisseria meningitidis serogroup A / serotype 4A (strain DSM 15465 / Z2491).